A 151-amino-acid chain; its full sequence is Calmodulin-like protein 9 (151 aa).

4 consecutive EF-hand domains span residues 8–43 (EQIQ…MGKN), 44–79 (PKAE…NTSQ), 81–116 (SASD…MGMK), and 117–151 (ITAE…AASY). Ca(2+) is bound by residues D94, D96, D98, E105, D130, D132, D134, and E141.

The protein belongs to the calmodulin family. Interacts with IQD1. Interacts with ILK1. Binds to ABCG36. Expressed in leaves, flowers and siliques.

Its function is as follows. Potential calcium sensor. This chain is Calmodulin-like protein 9, found in Arabidopsis thaliana (Mouse-ear cress).